The chain runs to 511 residues: MEKFEGYSEKHKSRQQYFVYPLLFQEYIYAFAHDYGLKGSEPVEIVSCNNKKFSSLLVKRLIIRMYQQNFWINSVNHSNQDRLLDYKNYFYSEFYSQILSEGFAIVAEIPFSLRELSCPKEKEIPKFQNLRSIHSIFPFLEDKFLHLDYLSHIEIPYPIHLEILVQLLQYRIQDVPSLHLLRFFLNYYSNWNSLIASMKSIFLLKKENKRLFRFLYNSYVSEYEFFLLFLRKQSSFLPLASSGTFLERIHFSRKMEHFGVMYPGFFRKTLWFFMDSLMHYVRYQGKAILASKGTFFLKKKWKCYFVYFWQYSFSFWTQPRRIHLNQLANSCFDFLGYLSSVPKSTLLVRNQMLENSFLIDTRMKKFDTIVPAIPLIASLSKAQFCTRLGHPISKPIWTDLLDWDILDRFGRICRNLFHYHSGSSKKQTLYRLKYILRLSCARTLARKHKSTVRTFMLRLGSVFLEEFFTEEEQVFSLMFTKTTFFSFRGSHSERIWYLDIICINDLVNPLN.

The protein belongs to the intron maturase 2 family. MatK subfamily.

It localises to the plastid. It is found in the chloroplast. Its function is as follows. Usually encoded in the trnK tRNA gene intron. Probably assists in splicing its own and other chloroplast group II introns. This chain is Maturase K, found in Melica altissima (Siberian melic grass).